Reading from the N-terminus, the 349-residue chain is Flavonol synthase/flavanone 3-hydroxylase (349 aa).

A Fe2OG dioxygenase domain is found at 213–310 (DIVYMLKINY…RMSWPVFLEP (98 aa)). Residues His238, Asp240, and His291 each contribute to the Fe cation site.

The protein belongs to the iron/ascorbate-dependent oxidoreductase family. The cofactor is Fe cation. It depends on L-ascorbate as a cofactor.

The protein localises to the cytoplasm. It carries out the reaction a (2R,3R)-dihydroflavonol + 2-oxoglutarate + O2 = a flavonol + succinate + CO2 + H2O. The catalysed reaction is a (2S)-flavan-4-one + 2-oxoglutarate + O2 = a (2R,3R)-dihydroflavonol + succinate + CO2. It functions in the pathway secondary metabolite biosynthesis; flavonoid biosynthesis. Catalyzes the formation of flavonols from dihydroflavonols. It can act on dihydrokaempferol to produce kaempferol, on dihydroquercetin to produce quercitin and on dihydromyricetin to produce myricetin. The protein is Flavonol synthase/flavanone 3-hydroxylase of Solanum tuberosum (Potato).